The primary structure comprises 661 residues: Arginine--tRNA ligase, cytoplasmic (661 aa).

At methionine 1 the chain carries N-acetylmethionine. The tract at residues methionine 1–asparagine 73 is could be involved in the assembly of the multisynthetase complex. L-arginine is bound by residues serine 201–asparagine 203, histidine 212, tyrosine 385, aspartate 389, and glutamine 413. The short motif at proline 202–leucine 213 is the 'HIGH' region element. The interaction with tRNA stretch occupies residues asparagine 530–serine 544.

This sequence belongs to the class-I aminoacyl-tRNA synthetase family. As to quaternary structure, interacts (via N-terminus) with AIMP1 (via N-terminus); this stimulates its catalytic activity. Interacts (via N-terminus) with LARS2 (via C-terminus). Monomer. Part of a multisubunit complex that groups tRNA ligases for Arg (RARS1), Asp (DARS1), Gln (QARS1), Ile (IARS1), Leu (LARS1), Lys (KARS1), Met (MARS1) the bifunctional ligase for Glu and Pro (EPRS1) and the auxiliary subunits AIMP1/p43, AIMP2/p38 and EEF1E1/p18. Interacts with QARS1. Part of a complex composed of RARS1, QARS1 and AIMP1.

Its subcellular location is the cytoplasm. It localises to the cytosol. The catalysed reaction is tRNA(Arg) + L-arginine + ATP = L-arginyl-tRNA(Arg) + AMP + diphosphate. Functionally, forms part of a macromolecular complex that catalyzes the attachment of specific amino acids to cognate tRNAs during protein synthesis. Modulates the secretion of AIMP1 and may be involved in generation of the inflammatory cytokine EMAP2 from AIMP1. The polypeptide is Arginine--tRNA ligase, cytoplasmic (RARS1) (Cricetulus griseus (Chinese hamster)).